The primary structure comprises 557 residues: MFKSDIEIAQESKMKNIKDIAENIGLTEEDIDLYGKYKCKISLDVLKNNKDKKDGKLILVTAINPTPAGEGKSTVTVGLGQALWKKNKKAVIALREPSLGPVFGIKGGAAGGGYSQVVPMEDINLHFTGDMHAITSANNLLAAAIDNHIHQGNILKIDQRRILFKRVMDMNDRALRNVIVALGGKVNGFPREDGFMITVASEIMAILCLAENLMDLKNKMGEILVAYSTEGNPIYCKDLEVQGAMALLMKDAIKPNLVQTLENTPAIIHGGPFANIAHGCNSILGTKMALKLGDYVITEAGFGADLGAEKFFDIKCRKANLKPNCVVIVATVRALKYNSGIPKENLKEQNMEALSKGIKNLGKHIENVNKFGVPAVVAINKFISDTEEEIEFIKKYCKELGAEVSIAEVWEKGGNGGLELADKVLDTIENKESKFNPIYEETLNIKQKIETIAQEIYGAEGVDYSKEAEKQISEIEKLDLDKKPVCMAKTQYSLSDDAKLLGRPCGFRINVKEVRISNGAGFIVVLTGNVMTMPGLPKKPAANNMNVLSDGNIVGLF.

66-73 (TPAGEGKS) is a binding site for ATP.

Belongs to the formate--tetrahydrofolate ligase family.

The catalysed reaction is (6S)-5,6,7,8-tetrahydrofolate + formate + ATP = (6R)-10-formyltetrahydrofolate + ADP + phosphate. It functions in the pathway one-carbon metabolism; tetrahydrofolate interconversion. The sequence is that of Formate--tetrahydrofolate ligase from Clostridium botulinum (strain Loch Maree / Type A3).